The sequence spans 169 residues: MRDAVTSLIRNYDTTGRYFDRDAIESLKDYFASGNDRITVAAMINSQSAEIVKAAANSLFEAVPELLLAGGNAYTTRRFSACLRDMDYYLRYGTYALIAGDMDVLNERVLQGLRETYNSLGVPIAPTVRGIQFLKDAIKEMAAAAGIANTAFIDEPFDHMTRELSEVDL.

Residue N72 is modified to N4-methylasparagine. C82 serves as a coordination point for (2R,3E)-phycocyanobilin.

The protein belongs to the phycobiliprotein family. As to quaternary structure, heterodimer of ApcE and this beta chain. In terms of processing, contains one covalently linked bilin chromophore. The chromophore is added by phycocyanobilin lyase CpcUS.

The protein resides in the cellular thylakoid membrane. In terms of biological role, a variant beta-allophycocyanin (AP) which forms a complex with ApcE, a phycobilisome terminal emitter that influences energy transfer to photosystem II. This chain is Allophycocyanin subunit beta-18 (apcF), found in Picosynechococcus sp. (strain ATCC 27264 / PCC 7002 / PR-6) (Agmenellum quadruplicatum).